The sequence spans 432 residues: Aspartate aminotransferase (432 aa).

Arg-45–Gly-46 lines the substrate pocket. Ser-109–Leu-111 serves as a coordination point for pyridoxal 5'-phosphate. Tyr-148–Arg-150 provides a ligand contact to substrate. Pyridoxal 5'-phosphate contacts are provided by residues Asn-197, Tyr-229, and Ser-262 to Lys-265. Arg-400 provides a ligand contact to substrate.

This sequence belongs to the class-I pyridoxal-phosphate-dependent aminotransferase family. Homodimer. Requires pyridoxal 5'-phosphate as cofactor.

It carries out the reaction L-aspartate + 2-oxoglutarate = oxaloacetate + L-glutamate. This chain is Aspartate aminotransferase, found in Corynebacterium glutamicum (strain ATCC 13032 / DSM 20300 / JCM 1318 / BCRC 11384 / CCUG 27702 / LMG 3730 / NBRC 12168 / NCIMB 10025 / NRRL B-2784 / 534).